A 357-amino-acid chain; its full sequence is Glucose 1-dehydrogenase (357 aa).

Position 38 (D38) interacts with Zn(2+). 2 residues coordinate substrate: T40 and H49. Zn(2+) contacts are provided by H63 and E64. Substrate contacts are provided by E114 and E150. E150 provides a ligand contact to Zn(2+). NADP(+) is bound by residues 181-184 (NGSL), 207-208 (RR), S228, 272-274 (LGV), and 301-303 (SVN). N303 is a substrate binding site.

This sequence belongs to the zinc-containing alcohol dehydrogenase family. Glucose 1-dehydrogenase subfamily. Homodimer. Requires Zn(2+) as cofactor.

The enzyme catalyses D-glucose + NAD(+) = D-glucono-1,5-lactone + NADH + H(+). The catalysed reaction is D-glucose + NADP(+) = D-glucono-1,5-lactone + NADPH + H(+). Its activity is regulated as follows. Activated by molar concentrations of KCl or NaCl. Inhibited by EDTA in vitro. In terms of biological role, catalyzes the NAD(P)(+)-dependent oxidation of D-glucose to D-gluconate. Displays broad substrate specificity since it is able to catalyze the oxidation of a number of alternative aldose sugars, such as D-xylose, D-galactose, and D-fucose, to the corresponding glyconate. Can utilize both NAD(+) and NADP(+) as electron acceptor, with a preference for NADP(+). Physiologically, seems to be involved in the degradation of glucose through a modified Entner-Doudoroff pathway. The chain is Glucose 1-dehydrogenase from Haloferax mediterranei (strain ATCC 33500 / DSM 1411 / JCM 8866 / NBRC 14739 / NCIMB 2177 / R-4) (Halobacterium mediterranei).